A 390-amino-acid polypeptide reads, in one-letter code: Pyruvate dehydrogenase E1 component subunit alpha-1, mitochondrial (390 aa).

A mitochondrion-targeting transit peptide spans 1–15 (MAAAILLRRVPPARA). The pyruvate site is built by histidine 91, tyrosine 117, arginine 118, glycine 166, valine 168, aspartate 197, glycine 198, alanine 199, asparagine 226, and tyrosine 228. Positions 117, 118, 166, 168, 197, 198, 199, and 226 each coordinate thiamine diphosphate. Aspartate 197 serves as a coordination point for Mg(2+). Asparagine 226 and tyrosine 228 together coordinate Mg(2+). Histidine 292 is a thiamine diphosphate binding site. The tract at residues 293–312 (SMSDPGSTYRTRDEISGVRQ) is disordered. Basic and acidic residues predominate over residues 302 to 312 (RTRDEISGVRQ).

In terms of assembly, tetramer of 2 alpha and 2 beta subunits. Thiamine diphosphate serves as cofactor. It depends on Mg(2+) as a cofactor.

It localises to the mitochondrion matrix. The catalysed reaction is N(6)-[(R)-lipoyl]-L-lysyl-[protein] + pyruvate + H(+) = N(6)-[(R)-S(8)-acetyldihydrolipoyl]-L-lysyl-[protein] + CO2. In terms of biological role, the pyruvate dehydrogenase complex catalyzes the overall conversion of pyruvate to acetyl-CoA and CO(2). It contains multiple copies of three enzymatic components: pyruvate dehydrogenase (E1), dihydrolipoamide acetyltransferase (E2) and lipoamide dehydrogenase (E3). This is Pyruvate dehydrogenase E1 component subunit alpha-1, mitochondrial from Oryza sativa subsp. japonica (Rice).